Reading from the N-terminus, the 277-residue chain is Diaminopimelate epimerase (277 aa).

The substrate site is built by N13, Q46, and N66. Residue C75 is the Proton donor of the active site. Residues 76 to 77 (GN), N159, N192, and 210 to 211 (ER) each bind substrate. C219 functions as the Proton acceptor in the catalytic mechanism. 220 to 221 (GT) serves as a coordination point for substrate.

Belongs to the diaminopimelate epimerase family. In terms of assembly, homodimer.

Its subcellular location is the cytoplasm. It carries out the reaction (2S,6S)-2,6-diaminopimelate = meso-2,6-diaminopimelate. It participates in amino-acid biosynthesis; L-lysine biosynthesis via DAP pathway; DL-2,6-diaminopimelate from LL-2,6-diaminopimelate: step 1/1. Functionally, catalyzes the stereoinversion of LL-2,6-diaminopimelate (L,L-DAP) to meso-diaminopimelate (meso-DAP), a precursor of L-lysine and an essential component of the bacterial peptidoglycan. This is Diaminopimelate epimerase from Azoarcus sp. (strain BH72).